The primary structure comprises 432 residues: Glutamyl-tRNA reductase (432 aa).

Substrate-binding positions include 50–53, S110, 115–117, and Q121; these read TCNR and ETQ. C51 acts as the Nucleophile in catalysis. 190–195 contributes to the NADP(+) binding site; that stretch reads GVGEMS.

This sequence belongs to the glutamyl-tRNA reductase family. Homodimer.

It catalyses the reaction (S)-4-amino-5-oxopentanoate + tRNA(Glu) + NADP(+) = L-glutamyl-tRNA(Glu) + NADPH + H(+). It participates in porphyrin-containing compound metabolism; protoporphyrin-IX biosynthesis; 5-aminolevulinate from L-glutamyl-tRNA(Glu): step 1/2. Functionally, catalyzes the NADPH-dependent reduction of glutamyl-tRNA(Glu) to glutamate 1-semialdehyde (GSA). The protein is Glutamyl-tRNA reductase of Sulfurimonas denitrificans (strain ATCC 33889 / DSM 1251) (Thiomicrospira denitrificans (strain ATCC 33889 / DSM 1251)).